We begin with the raw amino-acid sequence, 292 residues long: Probable 2-(5''-triphosphoribosyl)-3'-dephosphocoenzyme-A synthase (292 aa).

This sequence belongs to the CitG/MdcB family.

It carries out the reaction 3'-dephospho-CoA + ATP = 2'-(5''-triphospho-alpha-D-ribosyl)-3'-dephospho-CoA + adenine. This Shigella flexneri protein is Probable 2-(5''-triphosphoribosyl)-3'-dephosphocoenzyme-A synthase.